The sequence spans 770 residues: Tripartite terminase subunit 1 (770 aa).

The C3H1-type zinc finger occupies 199-227; it reads CAICFEELCITANQGETLHRRLLGCICDH. 675–682 contributes to the ATP binding site; sequence FTSVFHCG.

The protein belongs to the herpesviridae TRM1 protein family. In terms of assembly, associates with TRM2 and TRM3 to form the tripartite terminase complex. Interacts with portal protein.

It localises to the host nucleus. Its function is as follows. Component of the molecular motor that translocates viral genomic DNA in empty capsid during DNA packaging. Forms a tripartite terminase complex together with TRM2 and TRM3 in the host cytoplasm. Once the complex reaches the host nucleus, it interacts with the capsid portal vertex. This portal forms a ring in which genomic DNA is translocated into the capsid. TRM1 carries an endonuclease activity that plays an important role for the cleavage of concatemeric viral DNA into unit length genomes. The polypeptide is Tripartite terminase subunit 1 (Varicella-zoster virus (strain Dumas) (HHV-3)).